Here is a 150-residue protein sequence, read N- to C-terminus: Protein E6 (150 aa).

Zinc fingers lie at residues 30–66 (CVYCKETLQWADVYNFAICDLRVVYRDRSPYAACKRC) and 103–139 (CHRCQMPLGPEEKQRIVDEKRRFHEIAGQWKGLCTNC). The PDZ-binding domain signature appears at 148-150 (TQV).

Belongs to the papillomaviridae E6 protein family. As to quaternary structure, forms homodimers. Interacts with ubiquitin-protein ligase UBE3A/E6-AP and thus forms a complex with human TP53. Interacts with human NFX1 and MAGI3. Interacts with human IRF3; this interaction inhibits the establishment of antiviral state. Interacts with human TYK2; this interaction inhibits JAK-STAT activation by interferon alpha. Interacts with host DLG1; this interaction leads to the proteasomal degradation of DLG1.

The protein localises to the host cytoplasm. Its subcellular location is the host nucleus. Functionally, plays a major role in the induction and maintenance of cellular transformation. Acts mainly as an oncoprotein by stimulating the destruction of many host cell key regulatory proteins. E6 associates with host UBE3A/E6-AP ubiquitin-protein ligase, and inactivates tumor suppressors TP53 and TP73 by targeting them to the 26S proteasome for degradation. In turn, DNA damage and chromosomal instabilities increase and lead to cell proliferation and cancer development. The complex E6/E6AP targets several other substrates to degradation via the proteasome including host DLG1 or NFX1, a repressor of human telomerase reverse transcriptase (hTERT). The resulting increased expression of hTERT prevents the shortening of telomere length leading to cell immortalization. Other cellular targets including BAK1, Fas-associated death domain-containing protein (FADD) and procaspase 8, are degraded by E6/E6AP causing inhibition of apoptosis. E6 also inhibits immune response by interacting with host IRF3 and TYK2. These interactions prevent IRF3 transcriptional activities and inhibit TYK2-mediated JAK-STAT activation by interferon alpha resulting in inhibition of the interferon signaling pathway. This Human papillomavirus type 26 protein is Protein E6.